Here is a 284-residue protein sequence, read N- to C-terminus: 4-diphosphocytidyl-2-C-methyl-D-erythritol kinase (284 aa).

Residue Lys14 is part of the active site. 98 to 108 (PMGGGLGGGSS) serves as a coordination point for ATP. Residue Asp140 is part of the active site.

It belongs to the GHMP kinase family. IspE subfamily.

The catalysed reaction is 4-CDP-2-C-methyl-D-erythritol + ATP = 4-CDP-2-C-methyl-D-erythritol 2-phosphate + ADP + H(+). It functions in the pathway isoprenoid biosynthesis; isopentenyl diphosphate biosynthesis via DXP pathway; isopentenyl diphosphate from 1-deoxy-D-xylulose 5-phosphate: step 3/6. Functionally, catalyzes the phosphorylation of the position 2 hydroxy group of 4-diphosphocytidyl-2C-methyl-D-erythritol. In Shewanella pealeana (strain ATCC 700345 / ANG-SQ1), this protein is 4-diphosphocytidyl-2-C-methyl-D-erythritol kinase.